The chain runs to 344 residues: Ras association domain-containing protein 1 (344 aa).

S2 carries the post-translational modification N-acetylserine. A Phosphoserine modification is found at S2. The interval 2–119 is mediates interaction with E4F1; sequence SGEPELIELR…DLGWEPAVER (118 aa). R36 bears the Omega-N-methylarginine mark. The segment at 51–105 adopts a Phorbol-ester/DAG-type zinc-finger fold; that stretch reads GHRFQPAGPATHTWCDLCGDFIWGVVRKGLQCARLSADCKFTCHYRCRALVCLDC. The segment covering 179–189 has biased composition (low complexity); that stretch reads SVPSSKKPPSL. The interval 179-203 is disordered; sequence SVPSSKKPPSLQDARRGPGRGTSVR. One can recognise a Ras-associating domain in the interval 198–292; sequence RGTSVRRRTS…LSFVLKENDS (95 aa). Residues 294–341 enclose the SARAH domain; sequence EVNWDAFSMPELHNFLRILQREEEEHLRQILQKYSYCRQKIQEALHAC. Residues 315–318 are MOAP1-binding; the sequence is EEEE.

In terms of assembly, interacts with MAP1S. Interacts with XPA. Binds to the N-terminal of CDC20 during prometaphase. Binds to STK3/MST2 and STK4/MST1. Recruited to the TNFRSF1A and TNFRSF10A complexes in response to their respective cognate ligand, after internalization. Can self-associate. Part of a complex with MDM2, DAXX, RASSF1 and USP7. Interacts with ECM2. As to quaternary structure, interacts with MOAP1. Interacts with E4F1. Interacts with RSSF5 and probably associates with HRAS via a RSSF1 isoform A-RSSF5 heterodimer. Interacts (via C-terminus) with DAXX (via N-terminus); the interaction is independent of MDM2 and TP53. Interacts (via N-terminus) with MDM2 (via C-terminus); the interaction is independent of TP53. Interacts with RAB39A. Interacts with RAB39B; the interaction is weak. Interacts (via N-terminus) with DAXX. Interacts with RAB39B; the interaction is strong. Does not interact with RAB39A. In terms of assembly, interacts (via N-terminus) with DAXX. Isoform A and isoform C are ubiquitously expressed in all tissues tested, however isoform A is absent in many corresponding cancer cell lines. Isoform B is mainly expressed in hematopoietic cells.

It is found in the cytoplasm. The protein localises to the cytoskeleton. The protein resides in the microtubule organizing center. It localises to the centrosome. Its subcellular location is the spindle. It is found in the spindle pole. The protein localises to the nucleus. Functionally, potential tumor suppressor. Required for death receptor-dependent apoptosis. Mediates activation of STK3/MST2 and STK4/MST1 during Fas-induced apoptosis by preventing their dephosphorylation. When associated with MOAP1, promotes BAX conformational change and translocation to mitochondrial membranes in response to TNF and TNFSF10 stimulation. Isoform A interacts with CDC20, an activator of the anaphase-promoting complex, APC, resulting in the inhibition of APC activity and mitotic progression. Inhibits proliferation by negatively regulating cell cycle progression at the level of G1/S-phase transition by regulating accumulation of cyclin D1 protein. Isoform C has been shown not to perform these roles, no function has been identified for this isoform. Isoform A disrupts interactions among MDM2, DAXX and USP7, thus contributing to the efficient activation of TP53 by promoting MDM2 self-ubiquitination in cell-cycle checkpoint control in response to DNA damage. The chain is Ras association domain-containing protein 1 from Homo sapiens (Human).